The primary structure comprises 342 residues: Antihemorrhagic factor cHLP-B (342 aa).

Positions 1–19 (MNSLVALVLLGQMIGSTLS) are cleaved as a signal peptide. Cystatin fetuin-A-type domains lie at 20–129 (HHLQ…AKCH) and 140–253 (RNCP…SDCV). 6 disulfides stabilise this stretch: cysteine 28–cysteine 333, cysteine 85–cysteine 96, cysteine 110–cysteine 128, cysteine 142–cysteine 145, cysteine 204–cysteine 216, and cysteine 229–cysteine 252. N-linked (GlcNAc...) asparagine glycosylation occurs at asparagine 95. N-linked (GlcNAc...) asparagine glycosylation occurs at asparagine 203. N-linked (GlcNAc...) asparagine glycosylation is found at asparagine 281 and asparagine 292.

The protein belongs to the fetuin family. As to quaternary structure, homodimer. As to expression, expressed by the liver.

It localises to the secreted. Its function is as follows. Potent inhibitor of hemorrhagic activity but also proteolytic activities. Inhibition occurs by formation of a non-covalent complex between this protein and the proteinases at their metalloproteinase domains. This is Antihemorrhagic factor cHLP-B from Gloydius brevicauda (Korean slamosa snake).